We begin with the raw amino-acid sequence, 164 residues long: 3-isopropylmalate dehydratase small subunit 2 (164 aa).

This sequence belongs to the LeuD family. LeuD type 2 subfamily. As to quaternary structure, heterodimer of LeuC and LeuD.

It carries out the reaction (2R,3S)-3-isopropylmalate = (2S)-2-isopropylmalate. The protein operates within amino-acid biosynthesis; L-leucine biosynthesis; L-leucine from 3-methyl-2-oxobutanoate: step 2/4. In terms of biological role, catalyzes the isomerization between 2-isopropylmalate and 3-isopropylmalate, via the formation of 2-isopropylmaleate. The sequence is that of 3-isopropylmalate dehydratase small subunit 2 (leuD2) from Pyrococcus furiosus (strain ATCC 43587 / DSM 3638 / JCM 8422 / Vc1).